A 174-amino-acid polypeptide reads, in one-letter code: MTCCQTSFCGYPSFSISGTCGSSCCQPSCCETSCCQPRSCQTSFCGFPSFSTSGTCSSSCCQPSCCETSCCQPSCCETSCCQPSCCQISSCGTGCGIGGGISYGQEGSSGAVSTRIRWCRPDSRVEGTYLPPCCVVSCTPPSCCQLHHAQASCCRPSYCGQSCCRPVCCCEPTC.

A 15 X 5 AA repeats of C-C-[QEPVRC]-[TPIVLE]-[SRHVP] region spans residues 3-172 (CCQTSFCGYP…CCRPVCCCEP (170 aa)).

The protein belongs to the KRTAP type 1 family. Interacts with hair keratins. As to expression, expressed in the middle/upper portions of the hair cortex, in the region termed the keratogenous zone.

Functionally, in the hair cortex, hair keratin intermediate filaments are embedded in an interfilamentous matrix, consisting of hair keratin-associated proteins (KRTAP), which are essential for the formation of a rigid and resistant hair shaft through their extensive disulfide bond cross-linking with abundant cysteine residues of hair keratins. The matrix proteins include the high-sulfur and high-glycine-tyrosine keratins. The protein is Keratin-associated protein 1-5 (KRTAP1-5) of Homo sapiens (Human).